The primary structure comprises 830 residues: DNA gyrase subunit A (830 aa).

A Topo IIA-type catalytic domain is found at 33–497; it reads LPDVRDGLKP…AENDIDIEDL (465 aa). The O-(5'-phospho-DNA)-tyrosine intermediate role is filled by Y121. Residues 524–530 carry the GyrA-box motif; that stretch reads QKRGGRG. The tract at residues 805–830 is disordered; it reads KDDSEQLEDSEEVSEVHDAEENNSEE.

It belongs to the type II topoisomerase GyrA/ParC subunit family. As to quaternary structure, heterotetramer, composed of two GyrA and two GyrB chains. In the heterotetramer, GyrA contains the active site tyrosine that forms a transient covalent intermediate with DNA, while GyrB binds cofactors and catalyzes ATP hydrolysis.

It is found in the cytoplasm. It carries out the reaction ATP-dependent breakage, passage and rejoining of double-stranded DNA.. Its function is as follows. A type II topoisomerase that negatively supercoils closed circular double-stranded (ds) DNA in an ATP-dependent manner to modulate DNA topology and maintain chromosomes in an underwound state. Negative supercoiling favors strand separation, and DNA replication, transcription, recombination and repair, all of which involve strand separation. Also able to catalyze the interconversion of other topological isomers of dsDNA rings, including catenanes and knotted rings. Type II topoisomerases break and join 2 DNA strands simultaneously in an ATP-dependent manner. This Clostridium acetobutylicum (strain ATCC 824 / DSM 792 / JCM 1419 / IAM 19013 / LMG 5710 / NBRC 13948 / NRRL B-527 / VKM B-1787 / 2291 / W) protein is DNA gyrase subunit A.